The primary structure comprises 344 residues: 3-isopropylmalate dehydrogenase (344 aa).

Arginine 93, arginine 103, arginine 131, and aspartate 215 together coordinate substrate. Aspartate 215, aspartate 239, and aspartate 243 together coordinate Mg(2+). 273–285 (GSAPDIAGKGIAN) is a binding site for NAD(+).

Belongs to the isocitrate and isopropylmalate dehydrogenases family. LeuB type 1 subfamily. Homodimer. Mg(2+) is required as a cofactor. It depends on Mn(2+) as a cofactor.

It localises to the cytoplasm. It catalyses the reaction (2R,3S)-3-isopropylmalate + NAD(+) = 4-methyl-2-oxopentanoate + CO2 + NADH. It participates in amino-acid biosynthesis; L-leucine biosynthesis; L-leucine from 3-methyl-2-oxobutanoate: step 3/4. Catalyzes the oxidation of 3-carboxy-2-hydroxy-4-methylpentanoate (3-isopropylmalate) to 3-carboxy-4-methyl-2-oxopentanoate. The product decarboxylates to 4-methyl-2 oxopentanoate. The polypeptide is 3-isopropylmalate dehydrogenase (Streptococcus mutans serotype c (strain ATCC 700610 / UA159)).